We begin with the raw amino-acid sequence, 638 residues long: Chaperone protein DnaK (638 aa).

The residue at position 197 (Thr-197) is a Phosphothreonine; by autocatalysis. The interval 598–638 is disordered; sequence QQSAPSGAAAGPDEGAPSGSGGTSGTRGGDDVIDAEFTETK. Gly residues predominate over residues 615–624; the sequence is SGSGGTSGTR. Residues 628 to 638 show a composition bias toward acidic residues; sequence DVIDAEFTETK.

The protein belongs to the heat shock protein 70 family.

Its function is as follows. Acts as a chaperone. The chain is Chaperone protein DnaK from Gloeobacter violaceus (strain ATCC 29082 / PCC 7421).